A 282-amino-acid chain; its full sequence is Trans,polycis-polyprenyl diphosphate synthase ((2Z,6E)-farnesyl diphosphate specific) (282 aa).

Positions 1–30 (MSPKTVFSTDTHREPIPPQPHPSGARPPQL) are disordered. Asp44 is a catalytic residue. Position 44 (Asp44) interacts with Mg(2+). Substrate is bound by residues 45–48 (GNGR), Trp49, Arg57, His61, and 89–91 (STE). The Proton acceptor role is filled by Asn92. Substrate contacts are provided by residues Trp93, Arg95, Arg212, and 218–220 (RLS). Glu231 contacts Mg(2+). A disordered region spans residues 262–282 (GGAEPNPVGPPQSAAGAQGQD).

Belongs to the UPP synthase family. Homodimer. Mg(2+) is required as a cofactor.

The enzyme catalyses (2Z,6E)-farnesyl diphosphate + 10 isopentenyl diphosphate = di-trans,deca-cis-tridecaprenyl diphosphate + 10 diphosphate. The catalysed reaction is (2Z,6E)-farnesyl diphosphate + 11 isopentenyl diphosphate = di-trans,undeca-cis-tetradecaprenyl diphosphate + 11 diphosphate. It carries out the reaction (2Z,6E)-farnesyl diphosphate + 9 isopentenyl diphosphate = di-trans,nona-cis-dodecaprenyl diphosphate + 9 diphosphate. Catalyzes the synthesis of Z,E-mixed prenyl diphosphates by a condensation of isopentenyl diphosphate to an allylic diphosphate. It shows a large substrate specificity accepting dimethylallyl diphosphate (DMAPP), GPP, E,Efarnesyl diphosphate (FPP), E,E,E-geranylgeranyl diphosphate (GGPP), neryl diphosphate (Z-GPP), and (2Z,6E)-farnesyl diphosphate (Z,E-FPP) as allylic substrates. The enzyme exhibits the highest activity when Z,E-FPP is employed as an allylic substrate. The major product is dodecaprenyl diphosphate (C60) under every allylic substrate conditions, but the enzyme is also able to synthesize even C70 prenyl diphosphate as the maximum chain-length product. The chain is Trans,polycis-polyprenyl diphosphate synthase ((2Z,6E)-farnesyl diphosphate specific) from Thermobifida fusca (strain YX).